Consider the following 1380-residue polypeptide: Inverted formin-2 (1380 aa).

The region spanning 1 to 330 (MSLKEGAHTK…RAVLLADDCQ (330 aa)) is the GBD/FH3 domain. Disordered regions lie at residues 341 to 391 (LVTS…SGIP) and 440 to 541 (ISTS…PPPL). The segment covering 343–352 (TSKKHPSKEK) has biased composition (basic residues). Positions 367-385 (QTDKPKDESCEEKTVKKDP) are enriched in basic and acidic residues. Residues 432-592 (VVSNAIDRIS…DYSLGYLPKA (161 aa)) enclose the FH1 domain. Pro residues-rich tracts occupy residues 446-470 (LPPP…PPLP) and 478-541 (TPPP…PPPL). Residues 593-981 (YFKVNKPTLK…AEKRKKQLAD (389 aa)) enclose the FH2 domain. Coiled-coil stretches lie at residues 879–930 (LKKL…KLAD) and 956–991 (LKAK…KGEN). In terms of domain architecture, WH2 spans 1009–1024 (DALLADIKKGFQLRKT). Disordered regions lie at residues 1026-1049 (KTKT…DGTD), 1188-1244 (HKER…LSEA), and 1260-1380 (FQSS…CVVQ). 3 stretches are compositionally biased toward polar residues: residues 1206–1244 (GTES…LSEA), 1260–1284 (FQSS…QAQR), and 1294–1303 (TRDTTVTEGS). The segment covering 1306–1322 (EEDKCNDEGYPEHKTMG) has biased composition (basic and acidic residues). The segment covering 1328 to 1339 (SSSHSTTLQQSS) has biased composition (low complexity). Residues 1345–1359 (VKRGSSKHKKKRRSS) show a composition bias toward basic residues.

Belongs to the formin homology family.

This chain is Inverted formin-2 (inf2), found in Xenopus tropicalis (Western clawed frog).